A 498-amino-acid chain; its full sequence is MANKESKNVVIIGAGVLSTTFGSMIKELEPDWNIKLYERLDRPGIESSNERNNAGTGHAALCELNYTVQQPDGSIDIEKAKEINEQFEISKQFWGHLVKSGNISNPRDFINPLPHISFVRGKNNVKFLKNRYEAMRNFPMFDNIEYTEDIEEMRKWMPLMMTGRTGNEIMAASKIDEGTDVNYGELTRKMAKSIEKHPNADVQYNHEVINFNRRKDGTWEVKVKNRNSGDVETVLADYVFIGAGGGAIPLLQKTGIPESKHLGGFPISGQFLICTNPDVINEHDVKVYGKEPPGTPPMTVPHLDTRYIEGERTLLFGPFANIGPKFLRNGSNLDLFKSVKPYNITTLLASAVKNLPLIKYSIDQVLMTKEGCMNHLRTFYPEARDEDWQLYTAGKRVQVIKDTKEHGKGFIQFGTEVVNSKDHSVIALLGESPGASTSVSVALEVLEKNFAEYEKDWTPKLQKMIPSYGKSLIDDVKLMRATRKQTSKDLELNYYESK.

The protein belongs to the MQO family. FAD serves as cofactor.

The catalysed reaction is (S)-malate + a quinone = a quinol + oxaloacetate. The protein operates within carbohydrate metabolism; tricarboxylic acid cycle; oxaloacetate from (S)-malate (quinone route): step 1/1. This chain is Probable malate:quinone oxidoreductase 2, found in Staphylococcus epidermidis (strain ATCC 12228 / FDA PCI 1200).